The chain runs to 215 residues: 16S rRNA (adenine(1408)-N(1))-methyltransferase (215 aa).

Residues G32, D55, 87–88, 102–107, and 191–193 each bind S-adenosyl-L-methionine; these read AE, LMPWGS, and TSW.

This sequence belongs to the methyltransferase superfamily. Kanamycin-apramycin resistance family.

It catalyses the reaction adenosine(1408) in 16S rRNA + S-adenosyl-L-methionine = N(1)-methyladenosine(1408) in 16S rRNA + S-adenosyl-L-homocysteine + H(+). Its function is as follows. Specifically methylates the N(1) position of adenine 1408 in 16S rRNA. Confers resistance to various aminoglycosides. The chain is 16S rRNA (adenine(1408)-N(1))-methyltransferase (kamB) from Streptoalloteichus hindustanus.